The following is a 333-amino-acid chain: 4-hydroxyproline epimerase (333 aa).

Catalysis depends on Cys90, which acts as the Proton acceptor. Residues 91–92 and Asp249 each bind substrate; that span reads GH. The active-site Proton donor is Cys253. 254-255 contacts substrate; the sequence is GT.

It belongs to the proline racemase family. In terms of assembly, homodimer.

The enzyme catalyses trans-4-hydroxy-L-proline = cis-4-hydroxy-D-proline. Allows intracellular utilization of 4-hydroxyproline, one of the major constituents of host collagen, by converting 4-hydroxy-L-proline to 4-hydroxy-D-proline, which can be further metabolized by intracellular 4-hydroxy-D-proline oxidases. Strong B-cell mitogen. Plays an important role in the regulation of intra- and extracellular amino acid pools, allowing the bacterium to profit from host precursors and enzymatic pathways. This Brucella abortus (strain S19) protein is 4-hydroxyproline epimerase.